The sequence spans 593 residues: CTD kinase subunit alpha (593 aa).

2 stretches are compositionally biased toward polar residues: residues methionine 1–asparagine 17 and glutamine 29–asparagine 51. Positions methionine 1–proline 262 are disordered. Phosphoserine occurs at positions 56 and 58. The span at arginine 90–phenylalanine 103 shows a compositional bias: basic residues. Residues serine 104 and serine 109 each carry the phosphoserine modification. Low complexity predominate over residues serine 139–alanine 152. Over residues glutamine 160–serine 170 the composition is skewed to polar residues. Residues isoleucine 198 to serine 215 are compositionally biased toward low complexity. A Protein kinase domain is found at tyrosine 277 to phenylalanine 561. Residues isoleucine 283–valine 291 and lysine 306 each bind ATP. Aspartate 399 (proton acceptor) is an active-site residue.

Belongs to the protein kinase superfamily. CMGC Ser/Thr protein kinase family. CDC2/CDKX subfamily. As to quaternary structure, CTDK-I consists of three subunits, ctk1/lsk1, ctk2/lsc1 and ctk3 (also called alpha, beta and gamma). Interacts with ctk2/lsc1. This interaction is dependent on kinase activity.

It is found in the nucleus. It localises to the nucleolus. It carries out the reaction [DNA-directed RNA polymerase] + ATP = phospho-[DNA-directed RNA polymerase] + ADP + H(+). Its function is as follows. Catalytic subunit of the CTDK-I complex, which hyperphosphorylates the C-terminal heptapeptide repeat domain (CTD) of the largest RNA polymerase II subunit. Involved in RNA polymerase II transcriptional elongation and pre-mRNA 3'-end processing. Together with ctk2/lsc1, required for the regulation of cytokinesis by phosphorylating 'Ser-2' residues found in the heptad repeats of the CTD. Required for nuclear localization of ctk2/lsc1. Positively regulates the septation initiation network (SIN) and promotes successful completion of cytokinesis in response to perturbation of the actomyosin ring. Acts in parallel to clp1 to promote actomyosin ring stability upon cytokinesis checkpoint activation. The sequence is that of CTD kinase subunit alpha from Schizosaccharomyces pombe (strain 972 / ATCC 24843) (Fission yeast).